The primary structure comprises 1412 residues: DNA-directed RNA polymerase subunit beta'' (1412 aa).

Zn(2+) is bound by residues C220, C294, C301, and C304.

Belongs to the RNA polymerase beta' chain family. RpoC2 subfamily. In terms of assembly, in plastids the minimal PEP RNA polymerase catalytic core is composed of four subunits: alpha, beta, beta', and beta''. When a (nuclear-encoded) sigma factor is associated with the core the holoenzyme is formed, which can initiate transcription. Zn(2+) is required as a cofactor.

The protein localises to the plastid. It localises to the chloroplast. It carries out the reaction RNA(n) + a ribonucleoside 5'-triphosphate = RNA(n+1) + diphosphate. DNA-dependent RNA polymerase catalyzes the transcription of DNA into RNA using the four ribonucleoside triphosphates as substrates. This is DNA-directed RNA polymerase subunit beta'' from Chara vulgaris (Common stonewort).